We begin with the raw amino-acid sequence, 495 residues long: Probable cobyric acid synthase (495 aa).

Positions Asp-256–Ile-441 constitute a GATase cobBQ-type domain. The active-site Nucleophile is the Cys-334. His-433 is a catalytic residue.

It belongs to the CobB/CobQ family. CobQ subfamily.

The protein operates within cofactor biosynthesis; adenosylcobalamin biosynthesis. Its function is as follows. Catalyzes amidations at positions B, D, E, and G on adenosylcobyrinic A,C-diamide. NH(2) groups are provided by glutamine, and one molecule of ATP is hydrogenolyzed for each amidation. This chain is Probable cobyric acid synthase, found in Methanococcoides burtonii (strain DSM 6242 / NBRC 107633 / OCM 468 / ACE-M).